A 589-amino-acid chain; its full sequence is ATP-dependent lipid A-core flippase (589 aa).

5 helical membrane passes run 23-43 (WPIFLIGVVGMIAVSLSDAGF), 60-80 (LVFIRWLPFIIVLVFLFRGAA), 153-173 (VGLLVVMFLVSWKLTLFFLVI), 249-269 (VGTSLVQLLIAIPIAIVLFFA), and 272-292 (PSFHVTAGSFASIVSAMIMML). Residues 27 to 307 (LIGVVGMIAV…LTMVNSYIQK (281 aa)) form the ABC transmembrane type-1 domain. Residues 339–575 (IEYQGVSFAY…NGAYAELYRM (237 aa)) form the ABC transporter domain. Residue 373-380 (GRSGAGKS) participates in ATP binding.

This sequence belongs to the ABC transporter superfamily. Lipid exporter (TC 3.A.1.106) family. As to quaternary structure, homodimer.

Its subcellular location is the cell inner membrane. It catalyses the reaction ATP + H2O + lipid A-core oligosaccharideSide 1 = ADP + phosphate + lipid A-core oligosaccharideSide 2.. In terms of biological role, involved in lipopolysaccharide (LPS) biosynthesis. Translocates lipid A-core from the inner to the outer leaflet of the inner membrane. Transmembrane domains (TMD) form a pore in the inner membrane and the ATP-binding domain (NBD) is responsible for energy generation. This Coxiella burnetii (strain RSA 493 / Nine Mile phase I) protein is ATP-dependent lipid A-core flippase.